A 102-amino-acid chain; its full sequence is Putative septation protein SpoVG 2 (102 aa).

This sequence belongs to the SpoVG family.

Could be involved in septation. This is Putative septation protein SpoVG 2 from Listeria innocua serovar 6a (strain ATCC BAA-680 / CLIP 11262).